The sequence spans 366 residues: tRNA/tmRNA (uracil-C(5))-methyltransferase (366 aa).

The S-adenosyl-L-methionine site is built by Gln190, Tyr218, Asn223, Glu239, and Asp299. Cys324 serves as the catalytic Nucleophile. The active-site Proton acceptor is Glu358.

This sequence belongs to the class I-like SAM-binding methyltransferase superfamily. RNA M5U methyltransferase family. TrmA subfamily.

It catalyses the reaction uridine(54) in tRNA + S-adenosyl-L-methionine = 5-methyluridine(54) in tRNA + S-adenosyl-L-homocysteine + H(+). It carries out the reaction uridine(341) in tmRNA + S-adenosyl-L-methionine = 5-methyluridine(341) in tmRNA + S-adenosyl-L-homocysteine + H(+). Dual-specificity methyltransferase that catalyzes the formation of 5-methyluridine at position 54 (m5U54) in all tRNAs, and that of position 341 (m5U341) in tmRNA (transfer-mRNA). The protein is tRNA/tmRNA (uracil-C(5))-methyltransferase of Escherichia coli (strain UTI89 / UPEC).